A 477-amino-acid polypeptide reads, in one-letter code: Aspartyl/glutamyl-tRNA(Asn/Gln) amidotransferase subunit B (477 aa).

The protein belongs to the GatB/GatE family. GatB subfamily. Heterotrimer of A, B and C subunits.

The catalysed reaction is L-glutamyl-tRNA(Gln) + L-glutamine + ATP + H2O = L-glutaminyl-tRNA(Gln) + L-glutamate + ADP + phosphate + H(+). The enzyme catalyses L-aspartyl-tRNA(Asn) + L-glutamine + ATP + H2O = L-asparaginyl-tRNA(Asn) + L-glutamate + ADP + phosphate + 2 H(+). Functionally, allows the formation of correctly charged Asn-tRNA(Asn) or Gln-tRNA(Gln) through the transamidation of misacylated Asp-tRNA(Asn) or Glu-tRNA(Gln) in organisms which lack either or both of asparaginyl-tRNA or glutaminyl-tRNA synthetases. The reaction takes place in the presence of glutamine and ATP through an activated phospho-Asp-tRNA(Asn) or phospho-Glu-tRNA(Gln). The chain is Aspartyl/glutamyl-tRNA(Asn/Gln) amidotransferase subunit B from Clostridium tetani (strain Massachusetts / E88).